Here is a 116-residue protein sequence, read N- to C-terminus: uncharacterized protein (116 aa).

Positions 76–116 (VPPPRYSYIRSESSRNNLRNSARNQPQNLVSEQDSDSNREN) are disordered. Residues 85 to 99 (RSESSRNNLRNSARN) are compositionally biased toward low complexity.

This is an uncharacterized protein from Glycine max (Soybean).